A 504-amino-acid polypeptide reads, in one-letter code: ATP synthase subunit alpha (504 aa).

ATP is bound at residue 169–176 (GDRGTGKT).

It belongs to the ATPase alpha/beta chains family. In terms of assembly, F-type ATPases have 2 components, CF(1) - the catalytic core - and CF(0) - the membrane proton channel. CF(1) has five subunits: alpha(3), beta(3), gamma(1), delta(1), epsilon(1). CF(0) has three main subunits: a(1), b(2) and c(9-12). The alpha and beta chains form an alternating ring which encloses part of the gamma chain. CF(1) is attached to CF(0) by a central stalk formed by the gamma and epsilon chains, while a peripheral stalk is formed by the delta and b chains.

It is found in the cell inner membrane. It carries out the reaction ATP + H2O + 4 H(+)(in) = ADP + phosphate + 5 H(+)(out). Functionally, produces ATP from ADP in the presence of a proton gradient across the membrane. The alpha chain is a regulatory subunit. The protein is ATP synthase subunit alpha of Leptospira biflexa serovar Patoc (strain Patoc 1 / Ames).